We begin with the raw amino-acid sequence, 181 residues long: Large ribosomal subunit protein uL5 (181 aa).

It belongs to the universal ribosomal protein uL5 family. As to quaternary structure, part of the 50S ribosomal subunit; part of the 5S rRNA/L5/L18/L25 subcomplex. Contacts the 5S rRNA and the P site tRNA. Forms a bridge to the 30S subunit in the 70S ribosome.

This is one of the proteins that bind and probably mediate the attachment of the 5S RNA into the large ribosomal subunit, where it forms part of the central protuberance. In the 70S ribosome it contacts protein S13 of the 30S subunit (bridge B1b), connecting the 2 subunits; this bridge is implicated in subunit movement. Contacts the P site tRNA; the 5S rRNA and some of its associated proteins might help stabilize positioning of ribosome-bound tRNAs. This Campylobacter jejuni subsp. doylei (strain ATCC BAA-1458 / RM4099 / 269.97) protein is Large ribosomal subunit protein uL5.